Here is a 313-residue protein sequence, read N- to C-terminus: Protein-methionine-sulfoxide reductase catalytic subunit MsrP (313 aa).

The segment at residues 1–44 (MARWRPDMAEREATPEALYLRRREFLALGAAGAVGLLVARGARA) is a signal peptide (tat-type signal). Mo-molybdopterin is bound by residues Asn-76, 79 to 80 (YE), Cys-134, Thr-169, Asn-217, Arg-222, and 233 to 235 (GAK).

The protein belongs to the MsrP family. Heterodimer of a catalytic subunit (MsrP) and a heme-binding subunit (MsrQ). It depends on Mo-molybdopterin as a cofactor. In terms of processing, predicted to be exported by the Tat system. The position of the signal peptide cleavage has not been experimentally proven.

The protein resides in the periplasm. It catalyses the reaction L-methionyl-[protein] + a quinone + H2O = L-methionyl-(S)-S-oxide-[protein] + a quinol. The enzyme catalyses L-methionyl-[protein] + a quinone + H2O = L-methionyl-(R)-S-oxide-[protein] + a quinol. Functionally, part of the MsrPQ system that repairs oxidized periplasmic proteins containing methionine sulfoxide residues (Met-O), using respiratory chain electrons. Thus protects these proteins from oxidative-stress damage caused by reactive species of oxygen and chlorine generated by the host defense mechanisms. MsrPQ is essential for the maintenance of envelope integrity under bleach stress, rescuing a wide series of structurally unrelated periplasmic proteins from methionine oxidation. The catalytic subunit MsrP is non-stereospecific, being able to reduce both (R-) and (S-) diastereoisomers of methionine sulfoxide. This Anaeromyxobacter sp. (strain K) protein is Protein-methionine-sulfoxide reductase catalytic subunit MsrP.